We begin with the raw amino-acid sequence, 326 residues long: Organic solute transporter subunit alpha (326 aa).

At 1 to 28 the chain is on the extracellular side; it reads METSNFTLFDPRCRAEAPFAIDAIKQLD. N-linked (GlcNAc...) asparagine glycosylation is present at asparagine 5. A helical transmembrane segment spans residues 29–49; that stretch reads IFGKVLYTVLTLMATASMLVF. Residues 50 to 67 lie on the Cytoplasmic side of the membrane; it reads IEECIYIYKKVPAHKKST. Residues 68-88 form a helical membrane-spanning segment; the sequence is IIWVTGVAPVMAIMSCLGMWV. The Extracellular portion of the chain corresponds to 89-99; sequence PRATMFTDMTS. Residues 100-120 form a helical membrane-spanning segment; it reads ATYFAIVVFKFLILMIEEVGG. Over 121-161 the chain is Cytoplasmic; the sequence is DNAFLRRCEKQTFKISTGPCCCCCPCLPNVPITRRSLFILK. Residues 162–182 traverse the membrane as a helical segment; the sequence is LGSYQFALMKLVLTIFSIVLW. The Extracellular segment spans residues 183 to 198; that stretch reads TNGSFSLTNVSASGAA. Residues asparagine 184 and asparagine 191 are each glycosylated (N-linked (GlcNAc...) asparagine). The chain crosses the membrane as a helical span at residues 199–219; the sequence is IWINSFIGVLTIIALWPVAIM. Residues 220-237 lie on the Cytoplasmic side of the membrane; it reads FMHVREALRTLKIVPKYA. Residues 238 to 258 traverse the membrane as a helical segment; it reads MYQLVLILSQLQTAIINILAL. Asparagine 259 carries N-linked (GlcNAc...) asparagine glycosylation. The Extracellular segment spans residues 259-275; the sequence is NGTIACSPPYSSQARGY. Residues 276–296 traverse the membrane as a helical segment; the sequence is MMSQQLLIVEMFIITLVTRVL. Over 297–326 the chain is Cytoplasmic; it reads YRRQYEPIPEPDDVEEKKTVLSSKKAIDVA.

Belongs to the OST-alpha family. Interacts with slc51b. The Ost-alpha/Ost-beta complex is a heterodimer composed of alpha (slc51a) and beta (slc51b) subunit.

It is found in the cell membrane. The protein localises to the endoplasmic reticulum membrane. The catalysed reaction is taurocholate(out) = taurocholate(in). The enzyme catalyses prostaglandin E2(out) = prostaglandin E2(in). It carries out the reaction estrone 3-sulfate(out) = estrone 3-sulfate(in). It catalyses the reaction dehydroepiandrosterone 3-sulfate(out) = dehydroepiandrosterone 3-sulfate(in). The catalysed reaction is tauroursodeoxycholate(out) = tauroursodeoxycholate(in). The enzyme catalyses glycoursodeoxycholate(out) = glycoursodeoxycholate(in). It carries out the reaction glycocholate(out) = glycocholate(in). It catalyses the reaction taurochenodeoxycholate(out) = taurochenodeoxycholate(in). The catalysed reaction is glycochenodeoxycholate(out) = glycochenodeoxycholate(in). The enzyme catalyses taurodeoxycholate(out) = taurodeoxycholate(in). It carries out the reaction glycodeoxycholate(out) = glycodeoxycholate(in). Functionally, essential component of the Ost-alpha/Ost-beta complex, a heterodimer that acts as the intestinal basolateral transporter responsible for the translocation of bile acids (such as taurocholate), steroids (such as estrone sulfate), and eicosanoids (such as prostaglandin E2). This chain is Organic solute transporter subunit alpha (slc51a), found in Danio rerio (Zebrafish).